The following is a 196-amino-acid chain: Purpurin (196 aa).

An N-terminal signal peptide occupies residues 1-21; sequence MKYAQYVFLASIFSAVEYSLA. 3 disulfide bridges follow: Cys-24-Cys-182, Cys-90-Cys-196, and Cys-142-Cys-151.

This sequence belongs to the calycin superfamily. Lipocalin family.

The protein resides in the secreted. The protein localises to the extracellular space. It is found in the extracellular matrix. It localises to the interphotoreceptor matrix. In terms of biological role, may be involved in the transport of retinol between the photoreceptors and the pigmented epithelium. This chain is Purpurin, found in Gallus gallus (Chicken).